We begin with the raw amino-acid sequence, 77 residues long: NAD(P)H-quinone oxidoreductase subunit L (77 aa).

The next 2 helical transmembrane spans lie at 12 to 32 and 47 to 67; these read FVAYVGIISIYLFVIPLILFY and LGVYGLVFLFFPGLILFSPFL.

Belongs to the complex I NdhL subunit family. In terms of assembly, NDH-1 can be composed of about 15 different subunits; different subcomplexes with different compositions have been identified which probably have different functions.

It localises to the cellular thylakoid membrane. It catalyses the reaction a plastoquinone + NADH + (n+1) H(+)(in) = a plastoquinol + NAD(+) + n H(+)(out). It carries out the reaction a plastoquinone + NADPH + (n+1) H(+)(in) = a plastoquinol + NADP(+) + n H(+)(out). Functionally, NDH-1 shuttles electrons from an unknown electron donor, via FMN and iron-sulfur (Fe-S) centers, to quinones in the respiratory and/or the photosynthetic chain. The immediate electron acceptor for the enzyme in this species is believed to be plastoquinone. Couples the redox reaction to proton translocation, and thus conserves the redox energy in a proton gradient. Cyanobacterial NDH-1 also plays a role in inorganic carbon-concentration. The sequence is that of NAD(P)H-quinone oxidoreductase subunit L from Prochlorococcus marinus (strain MIT 9515).